The following is a 394-amino-acid chain: Enoyl-[acyl-carrier-protein] reductase [NADH] (394 aa).

Residues Gly48–Tyr53, Tyr74–Glu75, Asp111–Ala112, and Leu139–Ala140 contribute to the NAD(+) site. Tyr225 lines the substrate pocket. Catalysis depends on Tyr235, which acts as the Proton donor. Residues Lys244 and Leu273 to Thr275 contribute to the NAD(+) site.

This sequence belongs to the TER reductase family. Monomer.

The enzyme catalyses a 2,3-saturated acyl-[ACP] + NAD(+) = a (2E)-enoyl-[ACP] + NADH + H(+). Its pathway is lipid metabolism; fatty acid biosynthesis. Functionally, involved in the final reduction of the elongation cycle of fatty acid synthesis (FAS II). Catalyzes the reduction of a carbon-carbon double bond in an enoyl moiety that is covalently linked to an acyl carrier protein (ACP). The polypeptide is Enoyl-[acyl-carrier-protein] reductase [NADH] (Opitutus terrae (strain DSM 11246 / JCM 15787 / PB90-1)).